A 681-amino-acid polypeptide reads, in one-letter code: MSLSRKLLVIFFTWITALSMSKPIFVSSDNMNFTFKSFTIRNLTFLGDSHLRNGVVGLTRELGVPDTSSGTVIYNNPIRFYDPDSNTTASFSTHFSFTVQNLNPDPTSAGDGLAFFLSHDNDTLGSPGGYLGLVNSSQPMKNRFVAIEFDTKLDPHFNDPNGNHIGLDVDSLNSISTSDPLLSSQIDLKSGKSITSWIDYKNDLRLLNVFLSYTDPVTTTKKPEKPLLSVNIDLSPFLNGEMYVGFSGSTEGSTEIHLIENWSFKTSGFLPVRSKSNHLHNVSDSSVVNDDPVVIPSKKRRHRHNLAIGLGISCPVLICLALFVFGYFTLKKWKSVKAEKELKTELITGLREFSYKELYTATKGFHSSRVIGRGAFGNVYRAMFVSSGTISAVKRSRHNSTEGKTEFLAELSIIACLRHKNLVQLQGWCNEKGELLLVYEFMPNGSLDKILYQESQTGAVALDWSHRLNIAIGLASALSYLHHECEQQVVHRDIKTSNIMLDINFNARLGDFGLARLTEHDKSPVSTLTAGTMGYLAPEYLQYGTATEKTDAFSYGVVILEVACGRRPIDKEPESQKTVNLVDWVWRLHSEGRVLEAVDERLKGEFDEEMMKKLLLVGLKCAHPDSNERPSMRRVLQILNNEIEPSPVPKMKPTLSFSCGLSLDDIVSEDEEGDSIVYVVS.

The first 21 residues, 1 to 21 (MSLSRKLLVIFFTWITALSMS), serve as a signal peptide directing secretion. Topologically, residues 22-305 (KPIFVSSDNM…PSKKRRHRHN (284 aa)) are extracellular. Residues 30-265 (NMNFTFKSFT…IHLIENWSFK (236 aa)) form a legume-lectin like region. 7 N-linked (GlcNAc...) asparagine glycosylation sites follow: N32, N42, N86, N121, N135, N261, and N281. Residues 306-326 (LAIGLGISCPVLICLALFVFG) traverse the membrane as a helical segment. Over 327-681 (YFTLKKWKSV…EGDSIVYVVS (355 aa)) the chain is Cytoplasmic. Residues 365–643 (FHSSRVIGRG…RVLQILNNEI (279 aa)) form the Protein kinase domain. Residues 371–379 (IGRGAFGNV) and K394 each bind ATP. Catalysis depends on D493, which acts as the Proton acceptor.

The protein in the C-terminal section; belongs to the protein kinase superfamily. Ser/Thr protein kinase family. This sequence in the N-terminal section; belongs to the leguminous lectin family.

Its subcellular location is the cell membrane. It carries out the reaction L-seryl-[protein] + ATP = O-phospho-L-seryl-[protein] + ADP + H(+). The enzyme catalyses L-threonyl-[protein] + ATP = O-phospho-L-threonyl-[protein] + ADP + H(+). In terms of biological role, involved in resistance response to the pathogenic oomycetes Phytophthora infestans and Phytophthora capsici. The sequence is that of Probable L-type lectin-domain containing receptor kinase S.7 from Arabidopsis thaliana (Mouse-ear cress).